The following is a 503-amino-acid chain: 3-octaprenyl-4-hydroxybenzoate carboxy-lyase (503 aa).

Residue N176 coordinates Mn(2+). Prenylated FMN is bound by residues 179–181 (IYR), 193–195 (RWL), and 198–199 (RG). E242 contacts Mn(2+). The active-site Proton donor is the D303.

This sequence belongs to the UbiD family. Homohexamer. Requires prenylated FMN as cofactor. It depends on Mn(2+) as a cofactor.

It localises to the cell membrane. The catalysed reaction is a 4-hydroxy-3-(all-trans-polyprenyl)benzoate + H(+) = a 2-(all-trans-polyprenyl)phenol + CO2. It participates in cofactor biosynthesis; ubiquinone biosynthesis. Its function is as follows. Catalyzes the decarboxylation of 3-octaprenyl-4-hydroxy benzoate to 2-octaprenylphenol, an intermediate step in ubiquinone biosynthesis. This Ralstonia pickettii (strain 12J) protein is 3-octaprenyl-4-hydroxybenzoate carboxy-lyase.